The following is a 776-amino-acid chain: Reticulon-1 (776 aa).

4 disordered regions span residues 1-103 (MAAP…GEGS), 136-168 (ISESPEELGTPGSSLPDVPGIESRGLFSSDSGI), 204-244 (EVKH…EPAP), and 285-580 (LTEI…APPP). Residues 204 to 240 (EVKHQEQNHPELEDKDLDFKNKDTDISIKPEGVREPD) show a composition bias toward basic and acidic residues. Ser-327 bears the Phosphoserine mark. Residues 328-341 (PGSITPPSSGTEPS) show a composition bias toward low complexity. Phosphoserine occurs at positions 350, 352, and 487. Residues 497-511 (AIREETGVRAEERAP) show a composition bias toward basic and acidic residues. The 188-residue stretch at 589-776 (AIDLLYWRDI…KIPGAKRHAE (188 aa)) folds into the Reticulon domain. 2 consecutive transmembrane segments (helical) span residues 603–623 (IVFGSFLLLLFSLTQFSVVSV) and 705–725 (FAVLMWLLTYVGALFNGLTLL).

As to quaternary structure, interacts with NDRG1. Interacts with BACE1. Interacts with TMEM33. Post-translationally, phosphorylated.

Its subcellular location is the endoplasmic reticulum membrane. It localises to the golgi apparatus membrane. Functionally, inhibits amyloid precursor protein processing, probably by blocking BACE1 activity. The polypeptide is Reticulon-1 (RTN1) (Pan troglodytes (Chimpanzee)).